We begin with the raw amino-acid sequence, 287 residues long: ATP synthase gamma chain (287 aa).

The protein belongs to the ATPase gamma chain family. F-type ATPases have 2 components, CF(1) - the catalytic core - and CF(0) - the membrane proton channel. CF(1) has five subunits: alpha(3), beta(3), gamma(1), delta(1), epsilon(1). CF(0) has three main subunits: a, b and c.

The protein localises to the cell inner membrane. Produces ATP from ADP in the presence of a proton gradient across the membrane. The gamma chain is believed to be important in regulating ATPase activity and the flow of protons through the CF(0) complex. The protein is ATP synthase gamma chain of Serratia proteamaculans (strain 568).